The primary structure comprises 619 residues: ATP-dependent zinc metalloprotease FtsH (619 aa).

At 1–11 the chain is on the cytoplasmic side; sequence MDKQSKFRIKT. A helical transmembrane segment spans residues 12 to 32; the sequence is FFKKIIFFLIIFCFFYFFNFI. The Periplasmic portion of the chain corresponds to 33-131; it reads KKTKKITHTT…FKNYKIYTVL (99 aa). A helical transmembrane segment spans residues 132-152; sequence NFFYDYGFFLMIIIICWIFIF. Residues 153–619 lie on the Cytoplasmic side of the membrane; it reads RKIASRSSES…FKEDFASILD (467 aa). Residue 224–231 participates in ATP binding; that stretch reads GPPGTGKT. Position 447 (His-447) interacts with Zn(2+). The active site involves Glu-448. The Zn(2+) site is built by His-451 and Asp-522.

In the central section; belongs to the AAA ATPase family. This sequence in the C-terminal section; belongs to the peptidase M41 family. In terms of assembly, homohexamer. It depends on Zn(2+) as a cofactor.

It localises to the cell inner membrane. Functionally, acts as a processive, ATP-dependent zinc metallopeptidase for both cytoplasmic and membrane proteins. Plays a role in the quality control of integral membrane proteins. In Karelsulcia muelleri (strain DMIN) (Sulcia muelleri), this protein is ATP-dependent zinc metalloprotease FtsH.